Consider the following 417-residue polypeptide: D-amino acid dehydrogenase (417 aa).

3-17 (IVVLGGGVVGVTSAW) serves as a coordination point for FAD.

This sequence belongs to the DadA oxidoreductase family. It depends on FAD as a cofactor.

It carries out the reaction a D-alpha-amino acid + A + H2O = a 2-oxocarboxylate + AH2 + NH4(+). It participates in amino-acid degradation; D-alanine degradation; NH(3) and pyruvate from D-alanine: step 1/1. Oxidative deamination of D-amino acids. The protein is D-amino acid dehydrogenase of Aeromonas hydrophila subsp. hydrophila (strain ATCC 7966 / DSM 30187 / BCRC 13018 / CCUG 14551 / JCM 1027 / KCTC 2358 / NCIMB 9240 / NCTC 8049).